Consider the following 127-residue polypeptide: Small ribosomal subunit protein bS6 (127 aa).

Belongs to the bacterial ribosomal protein bS6 family.

Its function is as follows. Binds together with bS18 to 16S ribosomal RNA. The chain is Small ribosomal subunit protein bS6 from Sulfurovum sp. (strain NBC37-1).